We begin with the raw amino-acid sequence, 255 residues long: uncharacterized protein (255 aa).

This sequence belongs to the methyltransferase superfamily.

This is an uncharacterized protein from Mycolicibacterium paratuberculosis (strain ATCC BAA-968 / K-10) (Mycobacterium paratuberculosis).